Here is a 265-residue protein sequence, read N- to C-terminus: H-2 class II histocompatibility antigen, A-D beta chain (265 aa).

The signal sequence occupies residues 1–27; sequence MALQIPSLLLSAAVVVLMVLSSPRTEG. A beta-1 region spans residues 28–122; sequence GNSERHFVVQ…PETSTSLRRL (95 aa). Topologically, residues 28-226 are extracellular; sequence GNSERHFVVQ…RAQSESARSK (199 aa). 2 disulfides stabilise this stretch: Cys42-Cys106 and Cys145-Cys201. Residue Asn46 is glycosylated (N-linked (GlcNAc...) asparagine). The segment at 123–216 is beta-2; it reads EQPNVAISLS…SLKSPITVEW (94 aa). Residues 125 to 213 enclose the Ig-like C1-type domain; it reads PNVAISLSRT…EHPSLKSPIT (89 aa). The segment at 217–226 is connecting peptide; the sequence is RAQSESARSK. A helical membrane pass occupies residues 227 to 247; it reads MLSGIGGCVLGVIFLGLGLFI. Residues 248–265 lie on the Cytoplasmic side of the membrane; that stretch reads RHRSQKGPRGPPPAGLLQ.

It belongs to the MHC class II family. Post-translationally, ubiquitinated in immature dendritic cells leading to down-regulation of MHC class II.

It is found in the membrane. The sequence is that of H-2 class II histocompatibility antigen, A-D beta chain (H2-Ab1) from Mus musculus (Mouse).